Here is a 354-residue protein sequence, read N- to C-terminus: Chorismate synthase (354 aa).

Arginine 48 and arginine 54 together coordinate NADP(+). Residues 125–127, 238–239, glycine 278, 293–297, and arginine 319 each bind FMN; these read RSS, NA, and KPTSS.

Belongs to the chorismate synthase family. In terms of assembly, homotetramer. FMNH2 is required as a cofactor.

The enzyme catalyses 5-O-(1-carboxyvinyl)-3-phosphoshikimate = chorismate + phosphate. It functions in the pathway metabolic intermediate biosynthesis; chorismate biosynthesis; chorismate from D-erythrose 4-phosphate and phosphoenolpyruvate: step 7/7. In terms of biological role, catalyzes the anti-1,4-elimination of the C-3 phosphate and the C-6 proR hydrogen from 5-enolpyruvylshikimate-3-phosphate (EPSP) to yield chorismate, which is the branch point compound that serves as the starting substrate for the three terminal pathways of aromatic amino acid biosynthesis. This reaction introduces a second double bond into the aromatic ring system. In Blochmanniella pennsylvanica (strain BPEN), this protein is Chorismate synthase.